Here is a 69-residue protein sequence, read N- to C-terminus: Conotoxin AbVIE (69 aa).

An N-terminal signal peptide occupies residues 1–17 (VLIIAVLFLTACQLTTA). Positions 18 to 40 (ETSSRGKQKHRALRSTDKYSRMT) are excised as a propeptide. 3 disulfide bridges follow: Cys-43–Cys-57, Cys-50–Cys-61, and Cys-56–Cys-66.

It belongs to the conotoxin O1 superfamily. In terms of tissue distribution, expressed by the venom duct.

Its subcellular location is the secreted. This chain is Conotoxin AbVIE, found in Conus abbreviatus (Abbreviated cone).